The primary structure comprises 291 residues: Phosphoribosylaminoimidazole-succinocarboxamide synthase (291 aa).

It belongs to the SAICAR synthetase family.

It carries out the reaction 5-amino-1-(5-phospho-D-ribosyl)imidazole-4-carboxylate + L-aspartate + ATP = (2S)-2-[5-amino-1-(5-phospho-beta-D-ribosyl)imidazole-4-carboxamido]succinate + ADP + phosphate + 2 H(+). The protein operates within purine metabolism; IMP biosynthesis via de novo pathway; 5-amino-1-(5-phospho-D-ribosyl)imidazole-4-carboxamide from 5-amino-1-(5-phospho-D-ribosyl)imidazole-4-carboxylate: step 1/2. In Candida maltosa (Yeast), this protein is Phosphoribosylaminoimidazole-succinocarboxamide synthase (ADE1).